The chain runs to 660 residues: Bifunctional polymyxin resistance protein ArnA (660 aa).

The interval 1–304 is formyltransferase ArnAFT; the sequence is MKTVVFAYHD…TLGLVQGSRL (304 aa). Residue 86–88 coordinates (6R)-10-formyltetrahydrofolate; that stretch reads HLI. Histidine 104 (proton donor; for formyltransferase activity) is an active-site residue. Residues arginine 114 and 136-140 contribute to the (6R)-10-formyltetrahydrofolate site; that span reads VKRAD. The tract at residues 314-660 is dehydrogenase ArnADH; that stretch reads RRTRVLILGV…RTVDLTDKPS (347 aa). Residues aspartate 347 and 368 to 369 contribute to the NAD(+) site; that span reads DI. UDP-alpha-D-glucuronate contacts are provided by residues alanine 393, tyrosine 398, and 432–433; that span reads TS. The Proton acceptor; for decarboxylase activity role is filled by glutamate 434. UDP-alpha-D-glucuronate-binding positions include arginine 460, asparagine 492, 526–535, and tyrosine 613; that span reads KLIDGGKQKR. Arginine 619 serves as the catalytic Proton donor; for decarboxylase activity.

This sequence in the N-terminal section; belongs to the Fmt family. UDP-L-Ara4N formyltransferase subfamily. The protein in the C-terminal section; belongs to the NAD(P)-dependent epimerase/dehydratase family. UDP-glucuronic acid decarboxylase subfamily. Homohexamer, formed by a dimer of trimers.

It carries out the reaction UDP-alpha-D-glucuronate + NAD(+) = UDP-beta-L-threo-pentopyranos-4-ulose + CO2 + NADH. The catalysed reaction is UDP-4-amino-4-deoxy-beta-L-arabinose + (6R)-10-formyltetrahydrofolate = UDP-4-deoxy-4-formamido-beta-L-arabinose + (6S)-5,6,7,8-tetrahydrofolate + H(+). Its pathway is nucleotide-sugar biosynthesis; UDP-4-deoxy-4-formamido-beta-L-arabinose biosynthesis; UDP-4-deoxy-4-formamido-beta-L-arabinose from UDP-alpha-D-glucuronate: step 1/3. The protein operates within nucleotide-sugar biosynthesis; UDP-4-deoxy-4-formamido-beta-L-arabinose biosynthesis; UDP-4-deoxy-4-formamido-beta-L-arabinose from UDP-alpha-D-glucuronate: step 3/3. It participates in bacterial outer membrane biogenesis; lipopolysaccharide biosynthesis. Bifunctional enzyme that catalyzes the oxidative decarboxylation of UDP-glucuronic acid (UDP-GlcUA) to UDP-4-keto-arabinose (UDP-Ara4O) and the addition of a formyl group to UDP-4-amino-4-deoxy-L-arabinose (UDP-L-Ara4N) to form UDP-L-4-formamido-arabinose (UDP-L-Ara4FN). The modified arabinose is attached to lipid A and is required for resistance to polymyxin and cationic antimicrobial peptides. The protein is Bifunctional polymyxin resistance protein ArnA of Escherichia coli O81 (strain ED1a).